The sequence spans 1128 residues: Mastermind-like protein 2 (1128 aa).

Disordered regions lie at residues Met-1–Leu-22 and Gln-81–Arg-167. The span at Gly-12 to Leu-22 shows a compositional bias: gly residues. Over residues Pro-113–Ala-122 the composition is skewed to low complexity. Position 177 is a phosphoserine (Ser-177). Disordered stretches follow at residues Phe-343–Gln-509, Ser-521–Pro-649, Gln-677–Asn-714, Gln-758–Thr-794, and Gly-1039–Asp-1073. Polar residues-rich tracts occupy residues Leu-347–Arg-357 and Gly-374–Pro-387. The segment covering Ser-395 to Ala-426 has biased composition (low complexity). The span at Gln-431–Arg-446 shows a compositional bias: polar residues. 2 stretches are compositionally biased toward low complexity: residues His-453–Pro-473 and Pro-484–Ser-497. Residues Asn-566–Pro-584 are compositionally biased toward polar residues. Positions Thr-590 to Pro-649 are enriched in low complexity. 3 stretches are compositionally biased toward polar residues: residues Gln-677 to Gly-695, Asn-778 to Thr-794, and Gly-1039 to Pro-1052.

This sequence belongs to the mastermind family. In terms of assembly, interacts through its N-terminal region with the ankyrin repeat region of the Notch proteins NOTCH1, NOTCH2, NOTCH3 and NOTCH4. Forms a DNA-binding complex with Notch proteins and RBPSUH/RBP-J kappa.

It localises to the nucleus speckle. Acts as a transcriptional coactivator for NOTCH proteins. Has been shown to amplify NOTCH-induced transcription of HES1. Potentiates activation by NOTCH3 and NOTCH4 more efficiently than MAML1 or MAML3. The polypeptide is Mastermind-like protein 2 (MAML2) (Bos taurus (Bovine)).